A 223-amino-acid chain; its full sequence is Probable amino-acid ABC transporter permease protein PatM (223 aa).

One can recognise an ABC transmembrane type-1 domain in the interval 19–210; that stretch reads LGTTMEMATW…GVVVILTRVQ (192 aa). Helical transmembrane passes span 23–43, 59–78, 90–110, 156–176, and 186–206; these read MEMATWGLVFSLILSVILANI, ISFFRGTPLLVQLFLLYYGL, AFSAAVIGLTLHFAAYMAESI, FIDMIKSTSLAFTLGVAEIMA, and FRFFEAFLAVALIYWGVVVIL.

Belongs to the binding-protein-dependent transport system permease family. HisMQ subfamily.

It localises to the cell inner membrane. Probably part of a binding-protein-dependent transport system for an amino acid. Probably responsible for the translocation of the substrate across the membrane. The chain is Probable amino-acid ABC transporter permease protein PatM (patM) from Vibrio harveyi (Beneckea harveyi).